A 537-amino-acid chain; its full sequence is MKGSISYQIYKGALLLSALLNSVSAQQVGTLTAETHPALTWSKCTAGXCSQVSGSVVIDANWPXVHSTSGSTNCYTGNTWDATLCPDDVTCAANCAVDGARRQHLRVTTSGNSLRINFVTTASQKNIGSRLYLLENDTTYQKFNLLNQEFTFDVDVSNLPCGLNGALYFVDMDADGGMAKYPTNKAGAKYGTGYCDSQCPRDLKFINGQANVDGWTPSKNDVNSGIGNHGSCCAEMDIWEANSISNAVTPHPCDTPSQTMCTGQRCGGTYSTDRYGGTCDPDGCDFNPYRMGVTNFYGPGETIDTKSPFTVVTQFLTNDGTSTGTLSEIKRFYVQGGKVIGNPQSTIVGVSGNSITDSWCNAQKSAFGDTNEFSKHGGMAGMGAGLADGMVLVMSLWDDHASDMLWLDSTYPTNATSTTPGAKRGTCDISRRPNTVESTYPNAYVIYSNIKTGPLNSTFTGGTTSSSSTTTTTSKSTSTSSSSKTTTTVTTTTTSSGSSGTGARDWAQCGGNGWTGPTTCVSPYTCTKQNDWYSQCL.

The signal sequence occupies residues 1-18 (MKGSISYQIYKGALLLSA). Residues 19–453 (LLNSVSAQQV…YVIYSNIKTG (435 aa)) are catalytic. N136 carries an N-linked (GlcNAc...) asparagine glycan. The active-site Nucleophile is the E235. Residue E240 is the Proton donor of the active site. N414 and N456 each carry an N-linked (GlcNAc...) asparagine glycan. A linker region spans residues 454-477 (PLNSTFTGGTTSSSSTTTTTSKST). Residues 458 to 502 (TFTGGTTSSSSTTTTTSKSTSTSSSSKTTTTVTTTTTSSGSSGTG) are compositionally biased toward low complexity. Residues 458 to 503 (TFTGGTTSSSSTTTTTSKSTSTSSSSKTTTTVTTTTTSSGSSGTGA) form a disordered region. A CBM1 domain is found at 501–537 (TGARDWAQCGGNGWTGPTTCVSPYTCTKQNDWYSQCL). Cystine bridges form between C509–C526 and C520–C536.

It belongs to the glycosyl hydrolase 7 (cellulase C) family.

The protein resides in the secreted. It catalyses the reaction Hydrolysis of (1-&gt;4)-beta-D-glucosidic linkages in cellulose and cellotetraose, releasing cellobiose from the non-reducing ends of the chains.. The chain is Exoglucanase 1 (cbh1) from Penicillium janthinellum (Penicillium vitale).